The chain runs to 295 residues: Probable dTDP-4,6-dihydroxy-2-methyloxan-3-one 4-ketoreductase (295 aa).

NADH contacts are provided by residues 10–12, 36–37, 60–62, Tyr-126, and Lys-130; these read GML, DV, and AYT. NADPH contacts are provided by residues 11–12, 36–37, 60–62, Tyr-126, and Lys-130; these read ML, DV, and AYT. Catalysis depends on Tyr-126, which acts as the Proton donor/acceptor.

It belongs to the dTDP-4-dehydrorhamnose reductase family. The cofactor is Mg(2+).

It participates in antibiotic biosynthesis. In terms of biological role, involved in the biosynthesis of one of the two 2,6-deoxysugars, dTDP-L-oleandrose, attached to the macrolactone ring oleandolide to produce the aglycone antibiotic oleandomycin. Probably catalyzes the reduction of dTDP-4-keto-2,6-dideoxy-beta-L-galactose to yield dTDP-L-olivose. The polypeptide is Probable dTDP-4,6-dihydroxy-2-methyloxan-3-one 4-ketoreductase (Streptomyces antibioticus).